The sequence spans 206 residues: MPPTIRNNFPLFHDFVTASHFITQTILMRLSDAMYLEGSTRFENSHREDKPSTTTLVLLHYPKNFDNAHSGHNKHTDIGSLTLLFTPQWGLQLLSPIQKSKSWLWVQPRPGHAVINVGDSLRFLSGKRLKSCLHRVYPTGEVYQEEDRYSIAYFLRPESAANFEDVDGKVVSAKRWHDEKYVTYTEPHEKQDLSNILTGGMDQILA.

Residues 51–157 form the Fe2OG dioxygenase domain; that stretch reads PSTTTLVLLH…RYSIAYFLRP (107 aa). Positions 75, 77, and 134 each coordinate Fe cation. Residue Arg-148 coordinates 2-oxoglutarate.

The protein belongs to the iron/ascorbate-dependent oxidoreductase family. It depends on Fe(2+) as a cofactor.

It carries out the reaction L-glutamate + 2-oxoglutarate + O2 = (3R)-3-hydroxy-L-glutamate + succinate + CO2. The protein operates within secondary metabolite biosynthesis. Functionally, 2-oxoglutarate-dependent dioxygenase; part of the gene cluster that mediates the biosynthesis of the psychoactive metabolites ibotenic acid and muscimol. The first committed step is glutamate hydroxylation by the 2-oxoglutarate-dependent dioxygenase iboH, and the last step is decarboxylation of ibotenic acid to muscimol by the decarboxylase iboD. The order of the intermediate reactions is somewhat ambiguous. IboA likely activates the carboxylic acid at position 5 to introduce an amide bond, and the flavin monooxygenase iboF generates the N-O bond. There are several options for the latter step. One option is that iboF directly hydroxylates the amide nitrogen formed by iboA to produce a hydroxamic acid species. Another option is that iboF hydroxylates an external N-containing compound, whose resulting N-O bond is subsequently introduced into the hydroxyglutamate scaffold. The paralogous PLP-dependent cystathionine gamma-synthase-like enzymes iboG1 and iboG2 are likely involved in substitution of the OH group at position 3 by the O-N moiety. The first cyclic intermediate is most probably tricholomic acid which is likely desaturated to ibotenic acid by the cytochrome P450 monooxygenase iboC. The polypeptide is 2-oxoglutarate-dependent dioxygenase iboH (Amanita muscaria (strain Koide BX008)).